Here is a 270-residue protein sequence, read N- to C-terminus: uncharacterized protein (270 aa).

The N-terminal stretch at 1 to 23 (MKKLLIILAATLVLVLGSSGNFR) is a signal peptide.

This is an uncharacterized protein from Archaeoglobus fulgidus (strain ATCC 49558 / DSM 4304 / JCM 9628 / NBRC 100126 / VC-16).